Consider the following 597-residue polypeptide: Probable serine/threonine-protein kinase DDB_G0281745 (597 aa).

Positions 49–61 (TIDNSNGKQSTTP) are enriched in polar residues. Residues 49 to 320 (TIDNSNGKQS…RNNESTATTA (272 aa)) form a disordered region. The span at 72–97 (QPPPQQSQQQPPQPLKPIPATRPVPT) shows a compositional bias: pro residues. The span at 114–140 (TLPTTNSSTKYSTLPSRQFFEVSSSPG) shows a compositional bias: polar residues. Over residues 157–168 (SLSSNQNGSNLN) the composition is skewed to low complexity. Over residues 208 to 234 (PSPPSPPLQSPQPTPQQQPPPLKPIPQ) the composition is skewed to pro residues. Over residues 235 to 264 (PQQQQQQQQQQQQQQQQQQQQQQQQQQQQQ) the composition is skewed to low complexity. Residues 265–274 (QPPPLKPIPQ) are compositionally biased toward pro residues. The segment covering 275 to 301 (PQQSQPTQPIKSQIQIPITNTNGNTNG) has biased composition (low complexity). The 252-residue stretch at 334–585 (KFVGNEIGSG…KVLDTIQNIY (252 aa)) folds into the Protein kinase domain. ATP is bound by residues 340–348 (IGSGKYGSV) and lysine 361. Aspartate 454 serves as the catalytic Proton acceptor.

Belongs to the protein kinase superfamily. TKL Ser/Thr protein kinase family.

It carries out the reaction L-seryl-[protein] + ATP = O-phospho-L-seryl-[protein] + ADP + H(+). The enzyme catalyses L-threonyl-[protein] + ATP = O-phospho-L-threonyl-[protein] + ADP + H(+). The chain is Probable serine/threonine-protein kinase DDB_G0281745 from Dictyostelium discoideum (Social amoeba).